A 482-amino-acid polypeptide reads, in one-letter code: Exodeoxyribonuclease I (482 aa).

Residues 13-194 (LFYDYETFGI…TSDVYATIEL (182 aa)) enclose the Exonuclease domain. Mg(2+) is bound by residues aspartate 16, glutamate 18, and aspartate 187. Glutamate 18 contacts substrate. The 149-residue stretch at 203–351 (PKLFDFFFKY…LVKNVLLKKN (149 aa)) folds into the ExoI SH3-like domain. The ExoI C-terminal domain maps to 355–471 (NSLNVDLQIY…DLLKYVFKKY (117 aa)).

As to quaternary structure, monomer. Interacts with ssb (via C-terminus); this interaction stimulates the exonuclease activity by recruiting the enzyme to its substrate. Mg(2+) is required as a cofactor.

The enzyme catalyses Exonucleolytic cleavage in the 3'- to 5'-direction to yield nucleoside 5'-phosphates.. Functionally, degrades single-stranded DNA (ssDNA) in a highly processive manner. Also functions as a DNA deoxyribophosphodiesterase that releases deoxyribose-phosphate moieties following the cleavage of DNA at an apurinic/apyrimidinic (AP) site by either an AP endonuclease or AP lyase. In Buchnera aphidicola subsp. Schizaphis graminum (strain Sg), this protein is Exodeoxyribonuclease I (sbcB).